The primary structure comprises 66 residues: MEKKKGVRGKIILECTGCVRNSHNRVSKGVSRYITQKNRHNTPNRLELKKFCPRCYKHIIHGEIKK.

Belongs to the bacterial ribosomal protein bL33 family.

The protein resides in the plastid. The protein is Large ribosomal subunit protein bL33c of Cuscuta gronovii (Common dodder).